The following is a 1053-amino-acid chain: Putative ABC transporter C family member 15 (1053 aa).

The ABC transmembrane type-1 1 domain maps to 1–180 (MSVDVQRITD…LPDLLSALVQ (180 aa)). 4 consecutive transmembrane segments (helical) span residues 11–31 (FIWY…AIYI), 36–56 (LGLG…CNYP), 125–145 (FILW…CMLM), and 151–171 (AGAV…IFGL). The 224-residue stretch at 214-437 (VEIENGAFSW…NIGFEVLTQC (224 aa)) folds into the ABC transporter 1 domain. 249–256 (GAVGSGKS) contacts ATP. 5 consecutive transmembrane segments (helical) span residues 481–503 (LLVP…SNYW), 523–543 (ILLV…ARTI), 595–615 (MAVK…TIFV), 714–734 (LSHF…EGVI), and 738–758 (IAGL…TVIW). One can recognise an ABC transmembrane type-1 2 domain in the interval 483 to 765 (VPFIILAQSC…VIWNICNAEN (283 aa)). The 233-residue stretch at 804–1036 (FRDLQVRYAE…EDSFFSKLIK (233 aa)) folds into the ABC transporter 2 domain. ATP is bound at residue 836-843 (GRTGSGKS).

The protein belongs to the ABC transporter superfamily. ABCC family. Conjugate transporter (TC 3.A.1.208) subfamily.

It localises to the membrane. It carries out the reaction ATP + H2O + xenobioticSide 1 = ADP + phosphate + xenobioticSide 2.. In terms of biological role, pump for glutathione S-conjugates. The sequence is that of Putative ABC transporter C family member 15 (ABCC15) from Arabidopsis thaliana (Mouse-ear cress).